Consider the following 421-residue polypeptide: ATP-dependent RNA helicase RhlB (421 aa).

The short motif at 9 to 37 is the Q motif element; it reads QKFSDFALHPKVVEALEKKGFHNCTPIQA. In terms of domain architecture, Helicase ATP-binding spans 40-219; that stretch reads LPLTLAGRDV…FEQMNNAEYI (180 aa). Residue 53-60 coordinates ATP; the sequence is AQTGTGKT. A DEAD box motif is present at residues 165 to 168; the sequence is DEAD. The Helicase C-terminal domain occupies 245–390; that stretch reads RLLQTLIEEE…VSKYNPDALM (146 aa). The disordered stretch occupies residues 392 to 421; sequence DLPKPLRLTRPRTGNGPRRTGAPRNRRRSG. Residues 402-414 show a composition bias toward low complexity; sequence PRTGNGPRRTGAP.

Belongs to the DEAD box helicase family. RhlB subfamily. In terms of assembly, component of the RNA degradosome, which is a multiprotein complex involved in RNA processing and mRNA degradation.

It is found in the cytoplasm. The enzyme catalyses ATP + H2O = ADP + phosphate + H(+). In terms of biological role, DEAD-box RNA helicase involved in RNA degradation. Has RNA-dependent ATPase activity and unwinds double-stranded RNA. This chain is ATP-dependent RNA helicase RhlB, found in Escherichia coli (strain SMS-3-5 / SECEC).